Reading from the N-terminus, the 314-residue chain is MAKNNLTRVTEFILMGFMDHPKLEIPLFLVFLSFYLVTLLGNVGMIMLIQVDVKLYTPMYFFLSHLSLLDACYTSVITPQILATLATGKTVISYGHCAAQFFLFTICAGTECFLLAVMAYDRYAAIRNPLLYTVAMNPRLCWSLVVGAYVCGVSGAILRTTCTFTLSFCKDNQINFFFCDLPPLLKLACSDTANIEIVIIFFGNFVILANASVILISYLLIIKTILKVKSSGGRAKTFSTCASHITAVALFFGALIFMYLQSGSGKSLEEDKVVSVFYTVVIPMLNPLIYSLRNKDVKDAFRKVARRLQVSLSM.

Residues 1-25 (MAKNNLTRVTEFILMGFMDHPKLEI) are Extracellular-facing. Asparagine 5 is a glycosylation site (N-linked (GlcNAc...) asparagine). Residues 26–46 (PLFLVFLSFYLVTLLGNVGMI) form a helical membrane-spanning segment. At 47–54 (MLIQVDVK) the chain is on the cytoplasmic side. The chain crosses the membrane as a helical span at residues 55–75 (LYTPMYFFLSHLSLLDACYTS). At 76–99 (VITPQILATLATGKTVISYGHCAA) the chain is on the extracellular side. A disulfide bridge links cysteine 97 with cysteine 189. Residues 100-120 (QFFLFTICAGTECFLLAVMAY) traverse the membrane as a helical segment. Over 121 to 139 (DRYAAIRNPLLYTVAMNPR) the chain is Cytoplasmic. The helical transmembrane segment at 140-160 (LCWSLVVGAYVCGVSGAILRT) threads the bilayer. Over 161-197 (TCTFTLSFCKDNQINFFFCDLPPLLKLACSDTANIEI) the chain is Extracellular. A helical transmembrane segment spans residues 198–217 (VIIFFGNFVILANASVILIS). Residues 218 to 237 (YLLIIKTILKVKSSGGRAKT) are Cytoplasmic-facing. Residues 238–258 (FSTCASHITAVALFFGALIFM) traverse the membrane as a helical segment. Residues 259 to 271 (YLQSGSGKSLEED) are Extracellular-facing. A helical transmembrane segment spans residues 272-292 (KVVSVFYTVVIPMLNPLIYSL). The Cytoplasmic portion of the chain corresponds to 293–314 (RNKDVKDAFRKVARRLQVSLSM).

This sequence belongs to the G-protein coupled receptor 1 family.

Its subcellular location is the cell membrane. Its function is as follows. Odorant receptor. The protein is Olfactory receptor 9I1 (OR9I1) of Homo sapiens (Human).